The sequence spans 143 residues: Putative pre-16S rRNA nuclease (143 aa).

Belongs to the YqgF nuclease family.

It localises to the cytoplasm. In terms of biological role, could be a nuclease involved in processing of the 5'-end of pre-16S rRNA. This is Putative pre-16S rRNA nuclease from Leuconostoc mesenteroides subsp. mesenteroides (strain ATCC 8293 / DSM 20343 / BCRC 11652 / CCM 1803 / JCM 6124 / NCDO 523 / NBRC 100496 / NCIMB 8023 / NCTC 12954 / NRRL B-1118 / 37Y).